A 503-amino-acid polypeptide reads, in one-letter code: Probable cytosol aminopeptidase (503 aa).

The Mn(2+) site is built by lysine 270 and aspartate 275. Lysine 282 is an active-site residue. Positions 293, 352, and 354 each coordinate Mn(2+). Arginine 356 is a catalytic residue.

Belongs to the peptidase M17 family. Mn(2+) serves as cofactor.

It localises to the cytoplasm. The catalysed reaction is Release of an N-terminal amino acid, Xaa-|-Yaa-, in which Xaa is preferably Leu, but may be other amino acids including Pro although not Arg or Lys, and Yaa may be Pro. Amino acid amides and methyl esters are also readily hydrolyzed, but rates on arylamides are exceedingly low.. It carries out the reaction Release of an N-terminal amino acid, preferentially leucine, but not glutamic or aspartic acids.. Presumably involved in the processing and regular turnover of intracellular proteins. Catalyzes the removal of unsubstituted N-terminal amino acids from various peptides. In Sodalis glossinidius (strain morsitans), this protein is Probable cytosol aminopeptidase.